A 284-amino-acid chain; its full sequence is RNase adapter protein RapZ (284 aa).

Residue 8–15 coordinates ATP; sequence GRSGSGKS. GTP is bound at residue 56-59; that stretch reads DVRN. The tract at residues 266-284 is RNA-binding; sequence RSRGKNVQSRHRTLEKRKS.

This sequence belongs to the RapZ-like family. RapZ subfamily. Homotrimer.

Modulates the synthesis of GlmS, by affecting the processing and stability of the regulatory small RNA GlmZ. When glucosamine-6-phosphate (GlcN6P) concentrations are high in the cell, RapZ binds GlmZ and targets it to cleavage by RNase E. Consequently, GlmZ is inactivated and unable to activate GlmS synthesis. Under low GlcN6P concentrations, RapZ is sequestered and inactivated by an other regulatory small RNA, GlmY, preventing GlmZ degradation and leading to synthesis of GlmS. This is RNase adapter protein RapZ from Cronobacter sakazakii (strain ATCC BAA-894) (Enterobacter sakazakii).